The sequence spans 185 residues: Ribosome-recycling factor (185 aa).

Belongs to the RRF family.

The protein resides in the cytoplasm. Responsible for the release of ribosomes from messenger RNA at the termination of protein biosynthesis. May increase the efficiency of translation by recycling ribosomes from one round of translation to another. In Carboxydothermus hydrogenoformans (strain ATCC BAA-161 / DSM 6008 / Z-2901), this protein is Ribosome-recycling factor.